A 139-amino-acid polypeptide reads, in one-letter code: Cystatin cpi-1 (139 aa).

The signal sequence occupies residues 1–19; it reads MRFILLIALVFAVLDGINC. Asn29 carries N-linked (GlcNAc...) asparagine glycosylation. The short motif at 65 to 69 is the Secondary area of contact element; sequence QVVAG. Cys83 and Cys99 are joined by a disulfide.

Belongs to the cystatin family.

Its function is as follows. Cysteine protease inhibitor which inhibits members of the peptidase C1 family. Does not inhibit asparaginyl endopeptidase. May play a protective role against exogenous cysteine proteases derived from soil bacteria or fungi, or rotting fruits and vegetation. The chain is Cystatin cpi-1 from Caenorhabditis elegans.